A 180-amino-acid polypeptide reads, in one-letter code: Large ribosomal subunit protein uL6 (180 aa).

This sequence belongs to the universal ribosomal protein uL6 family. As to quaternary structure, part of the 50S ribosomal subunit.

This protein binds to the 23S rRNA, and is important in its secondary structure. It is located near the subunit interface in the base of the L7/L12 stalk, and near the tRNA binding site of the peptidyltransferase center. The sequence is that of Large ribosomal subunit protein uL6 from Picrophilus torridus (strain ATCC 700027 / DSM 9790 / JCM 10055 / NBRC 100828 / KAW 2/3).